The primary structure comprises 478 residues: Hepatitis A virus cellular receptor 1 (478 aa).

Positions 1–24 (MADPIMHLQVVILSLILHLADSVA) are cleaved as a signal peptide. Residues 25–126 (DSVNVDGVAG…WFNDMKITIS (102 aa)) form the Ig-like V-type domain. Topologically, residues 25–397 (DSVNVDGVAG…SPQMVNTTEG (373 aa)) are extracellular. Disulfide bonds link cysteine 41/cysteine 110, cysteine 51/cysteine 62, and cysteine 57/cysteine 109. 2 N-linked (GlcNAc...) asparagine glycosylation sites follow: asparagine 70 and asparagine 87. A run of 28 repeats spans residues 148 to 155 (VPTTTTTT), 156 to 161 (LPTTTT), 162 to 167 (LPTTTT), 168 to 173 (LPTTMT), 174 to 179 (LPTTTT), 180 to 185 (LPMTTT), 186 to 191 (LPTTTT), 192 to 197 (VPMTTT), 198 to 201 (LPTT), 202 to 207 (LPTTTT), 208 to 211 (LPTT), 212 to 217 (LPTTTT), 218 to 221 (LPTT), 222 to 227 (LPTTTT), 228 to 233 (LPTTMT), 234 to 239 (LPMTTT), 240 to 245 (LPTTTT), 246 to 251 (LPTTTT), 252 to 257 (LPTTTT), 258 to 263 (LPTTTT), 264 to 268 (LPTTT), 269 to 273 (LPTMT), 274 to 279 (LPTTTT), 280 to 285 (LPTTMT), 286 to 291 (LPMTTT), 292 to 297 (LPTTTT), 298 to 303 (LPTTTT), and 304 to 309 (LPTTTM). Positions 148-309 (VPTTTTTTLP…TTTTLPTTTM (162 aa)) are 28 X 6 AA approximate tandem repeats of L-P-[MT]-T-[MT]-T. The disordered stretch occupies residues 187 to 303 (PTTTTVPMTT…TTTTLPTTTT (117 aa)). Disordered regions lie at residues 320–339 (PMQD…PAET) and 344–370 (LLGA…TVTE). The segment covering 348-370 (TRTQPTSSPLYSYTTDGSDTVTE) has biased composition (polar residues). Residues asparagine 379 and asparagine 393 are each glycosylated (N-linked (GlcNAc...) asparagine). A helical membrane pass occupies residues 398-418 (IYAGVCISVLVLLAVLGVVIA). Residues 419–478 (KKYFFKKEIQQLSVSFSNHQFKTLQNAVKKEVHAEDNIYIENNLYAMNQDPVVLFESLRP) are Cytoplasmic-facing.

It belongs to the immunoglobulin superfamily. TIM family. In terms of assembly, interacts with STAM. Interacts with SELPLG.

The protein resides in the cell membrane. In terms of biological role, phosphatidylserine receptor that plays an important functional role in regulatory B-cells homeostasis including generation, expansion and suppressor functions. As P-selectin/SELPLG ligand, plays a specialized role in activated but not naive T-cell trafficking during inflammatory responses. Controls thereby T-cell accumulation in the inflamed central nervous system (CNS) and the induction of autoimmune disease. Also regulates expression of various anti-inflammatory cytokines and co-inhibitory ligands including IL10. Acts as a regulator of T-cell proliferation. May play a role in kidney injury and repair. This is Hepatitis A virus cellular receptor 1 (HAVCR1) from Chlorocebus aethiops (Green monkey).